A 754-amino-acid chain; its full sequence is ATP-dependent zinc metalloprotease FtsH (754 aa).

Over 1–9 the chain is Cytoplasmic; that stretch reads MKQRMKKPS. The helical transmembrane segment at 10-30 threads the bilayer; sequence LGTFILILILIGILAYVLWQF. Topologically, residues 31-186 are extracellular; that stretch reads LSPKLGYKSL…FDRPRGNFLS (156 aa). The chain crosses the membrane as a helical span at residues 187-207; sequence SFIVPYIPFLLISLFGFWLFF. The Cytoplasmic segment spans residues 208-754; that stretch reads RLSQNSQAGG…ESKIDSSKEQ (547 aa). ATP is bound at residue 277 to 284; the sequence is GPPGTGKT. His-499 is a binding site for Zn(2+). Glu-500 is an active-site residue. Zn(2+) contacts are provided by His-503 and Asp-577. Residues 713–754 are disordered; the sequence is QEKSYENEDQNQNSLEAINYNIDDQDDDKNDSESKIDSSKEQ. A compositionally biased stretch (basic and acidic residues) spans 743-754; that stretch reads DSESKIDSSKEQ.

This sequence in the central section; belongs to the AAA ATPase family. The protein in the C-terminal section; belongs to the peptidase M41 family. As to quaternary structure, homohexamer. Requires Zn(2+) as cofactor.

It is found in the cell membrane. In terms of biological role, acts as a processive, ATP-dependent zinc metallopeptidase for both cytoplasmic and membrane proteins. Plays a role in the quality control of integral membrane proteins. The sequence is that of ATP-dependent zinc metalloprotease FtsH from Mesomycoplasma conjunctivae (strain ATCC 25834 / NCTC 10147 / HRC/581) (Mycoplasma conjunctivae).